The primary structure comprises 280 residues: MATEAPVNIAPPECSTVVSTAVDSLIWQPNSLNMHMIRPKSAKGRTRPSLQKSQGVEVCAHHIPSPPPAIPYELPSSQKPGACAPKSPNQGASDEIPELQQQVPTGASSSLNKYPVLPSINRKNLEEEAVETVAKKASSLQLSSIRALYQDETGTMKTSEEDSRARACAVERKFIVRTKKQGSSRAGNLEEPSDQEPRLLLAVRSPTGQRFVRHFRPTDDLQTIVAVAEQKNKTSYRHCSIETMEVPRRRFSDLTKSLQECRIPHKSVLGISLEDGEGWP.

The segment at 41–94 is disordered; sequence SAKGRTRPSLQKSQGVEVCAHHIPSPPPAIPYELPSSQKPGACAPKSPNQGASD. Phosphoserine is present on S87. The region spanning 194–271 is the UBX domain; the sequence is DQEPRLLLAV…RIPHKSVLGI (78 aa).

This sequence belongs to the UBXN10 family. As to quaternary structure, interacts with CLUAP1; the interaction is direct and mediates interaction with the intraflagellar transport complex B (IFT-B). Interacts with VCP; the interaction is direct.

The protein localises to the cell projection. It is found in the cilium. Its function is as follows. VCP/p97-binding protein required for ciliogenesis. Acts as a tethering factor that facilitates recruitment of VCP/p97 to the intraflagellar transport complex B (IFT-B) in cilia. UBX domain-containing proteins act as tethering factors for VCP/p97 and may specify substrate specificity of VCP/p97. The polypeptide is UBX domain-containing protein 10 (Homo sapiens (Human)).